Reading from the N-terminus, the 525-residue chain is GMP synthase [glutamine-hydrolyzing] (525 aa).

The 199-residue stretch at 9-207 (RILILDFGSQ…VRDICQCEAL (199 aa)) folds into the Glutamine amidotransferase type-1 domain. Cys-86 acts as the Nucleophile in catalysis. Active-site residues include His-181 and Glu-183. Positions 208-400 (WTPAKIIDDA…LGLPYDMLYR (193 aa)) constitute a GMPS ATP-PPase domain. 235–241 (SGGVDSS) provides a ligand contact to ATP.

In terms of assembly, homodimer.

It carries out the reaction XMP + L-glutamine + ATP + H2O = GMP + L-glutamate + AMP + diphosphate + 2 H(+). It participates in purine metabolism; GMP biosynthesis; GMP from XMP (L-Gln route): step 1/1. In terms of biological role, catalyzes the synthesis of GMP from XMP. The sequence is that of GMP synthase [glutamine-hydrolyzing] from Shigella boydii serotype 18 (strain CDC 3083-94 / BS512).